Reading from the N-terminus, the 236-residue chain is 2-C-methyl-D-erythritol 4-phosphate cytidylyltransferase (236 aa).

It belongs to the IspD/TarI cytidylyltransferase family. IspD subfamily. In terms of assembly, homodimer.

It carries out the reaction 2-C-methyl-D-erythritol 4-phosphate + CTP + H(+) = 4-CDP-2-C-methyl-D-erythritol + diphosphate. It functions in the pathway isoprenoid biosynthesis; isopentenyl diphosphate biosynthesis via DXP pathway; isopentenyl diphosphate from 1-deoxy-D-xylulose 5-phosphate: step 2/6. Its function is as follows. Catalyzes the formation of 4-diphosphocytidyl-2-C-methyl-D-erythritol from CTP and 2-C-methyl-D-erythritol 4-phosphate (MEP). This chain is 2-C-methyl-D-erythritol 4-phosphate cytidylyltransferase, found in Salmonella paratyphi B (strain ATCC BAA-1250 / SPB7).